We begin with the raw amino-acid sequence, 393 residues long: S-adenosylmethionine decarboxylase proenzyme (393 aa).

Catalysis depends on residues Glu-11 and Glu-14. The active-site Schiff-base intermediate with substrate; via pyruvic acid is Ser-71. Position 71 is a pyruvic acid (Ser); by autocatalysis (Ser-71). Cys-85 serves as the catalytic Proton donor; for catalytic activity. Catalysis depends on proton acceptor; for processing activity residues Ser-236 and His-249.

Belongs to the eukaryotic AdoMetDC family. Requires pyruvate as cofactor. Is synthesized initially as an inactive proenzyme. Formation of the active enzyme involves a self-maturation process in which the active site pyruvoyl group is generated from an internal serine residue via an autocatalytic post-translational modification. Two non-identical subunits are generated from the proenzyme in this reaction, and the pyruvate is formed at the N-terminus of the alpha chain, which is derived from the carboxyl end of the proenzyme. The post-translation cleavage follows an unusual pathway, termed non-hydrolytic serinolysis, in which the side chain hydroxyl group of the serine supplies its oxygen atom to form the C-terminus of the beta chain, while the remainder of the serine residue undergoes an oxidative deamination to produce ammonia and the pyruvoyl group blocking the N-terminus of the alpha chain.

The catalysed reaction is S-adenosyl-L-methionine + H(+) = S-adenosyl 3-(methylsulfanyl)propylamine + CO2. Its pathway is amine and polyamine biosynthesis; S-adenosylmethioninamine biosynthesis; S-adenosylmethioninamine from S-adenosyl-L-methionine: step 1/1. This chain is S-adenosylmethionine decarboxylase proenzyme (SAMDC), found in Hordeum chilense (Barley).